The primary structure comprises 686 residues: Mannan-binding lectin serine protease 2 (686 aa).

A signal peptide spans 1–15 (MRLLTLLGLLCGSVA). The 122-residue stretch at 16–137 (TPLGPKWPEP…TGFEAFYAAE (122 aa)) folds into the CUB 1 domain. Positions 67, 75, 120, 122, 123, 138, 139, and 141 each coordinate Ca(2+). Cys72 and Cys90 are disulfide-bonded. One can recognise an EGF-like; calcium-binding domain in the interval 138-181 (DIDECQVAPGEAPTCDHHCHNHLGGFYCSCRAGYVLHRNKRTCS). 12 disulfide bridges follow: Cys142–Cys156, Cys152–Cys165, Cys167–Cys180, Cys184–Cys211, Cys241–Cys259, Cys300–Cys348, Cys328–Cys361, Cys366–Cys412, Cys396–Cys430, Cys434–Cys552, Cys598–Cys618, and Cys629–Cys660. Asn158, His159, and Gly162 together coordinate Ca(2+). Asn158 bears the (3R)-3-hydroxyasparagine mark. Residues 184–296 (CSGQVFTQRS…TGWKIHYTST (113 aa)) form the CUB 2 domain. Sushi domains lie at 298-363 (QPCP…ACSI) and 364-432 (VDCG…VCEP). A Peptidase S1 domain is found at 445–684 (IYGGQKAKPG…YIPWIENIIS (240 aa)). Active-site charge relay system residues include His483 and Asp532. Catalysis depends on Ser633, which acts as the Charge relay system.

It belongs to the peptidase S1 family. Homodimer; disulfide-linked. Binds MBL2. Isoform 2 binds to MASP1. Binds SERPING1. Dimerization and MBL2 binding requires calcium ions. Post-translationally, the iron and 2-oxoglutarate dependent 3-hydroxylation of aspartate and asparagine is (R) stereospecific within EGF domains. Activated by cleavage after Arg-444. The uncleaved zymogen is inactive towards synthetic substrates, but has sufficient activity to effect autocatalytic cleavage. As to expression, plasma.

The protein resides in the secreted. It catalyses the reaction Selective cleavage after Arg-223 in complement component C2 (-Ser-Leu-Gly-Arg-|-Lys-Ile-Gln-Ile) and after Arg-76 in complement component C4 (-Gly-Leu-Gln-Arg-|-Ala-Leu-Glu-Ile).. Serum protease that plays an important role in the activation of the complement system via mannose-binding lectin. After activation by auto-catalytic cleavage it cleaves C2 and C4, leading to their activation and to the formation of C3 convertase. The sequence is that of Mannan-binding lectin serine protease 2 (MASP2) from Homo sapiens (Human).